Consider the following 595-residue polypeptide: 73 kDa paraflagellar rod protein (595 aa).

A disordered region spans residues 294–317 (DAEATKRHAANKEKSDRYIRENED). A calmodulin-binding region spans residues 317–337 (DRQEETWNKIQDLERQLQKLG).

In terms of assembly, heterodimer of a 69 kDa and a 73 kDa protein.

The protein localises to the cell projection. It is found in the cilium. Its subcellular location is the flagellum. The protein resides in the cytoplasm. It localises to the cytoskeleton. Major component of the paraflagellar rod (PFR). The PFR is a highly ordered lattices of fibrous proteins that are located inside the flagellum and assume a fixed orientation with respect to the microtubular axoneme. This is 73 kDa paraflagellar rod protein (PFRC) from Trypanosoma brucei brucei.